The chain runs to 414 residues: Nuclear localization sequence-binding protein (414 aa).

Disordered regions lie at residues 1 to 172, 244 to 264, and 336 to 414; these read MAKT…TIFV, STSK…TPSE, and RPVR…KTFD. Over residues 10–26 the composition is skewed to basic and acidic residues; that stretch reads NKKEVKASKQAKEEKAK. Composition is skewed to low complexity over residues 27–44 and 54–73; these read AVSS…SSSE and ESSS…SSSD. The segment covering 78–87 has biased composition (basic and acidic residues); sequence AETKKEESKD. Ser93, Ser95, Ser96, Ser97, Ser116, Ser127, Ser129, Ser131, and Ser143 each carry phosphoserine. Residues 96-105 are compositionally biased toward acidic residues; the sequence is SSDEEEEEEK. The span at 106 to 117 shows a compositional bias: basic and acidic residues; it reads EETKKEESKESS. Residues 118–128 show a composition bias toward low complexity; sequence SSDSSSSSSSD. Positions 134–144 are enriched in basic and acidic residues; it reads EESNDKKRKSE. RRM domains lie at 168–246 and 267–345; these read ATIF…MSTS and DTLF…FSSP. A compositionally biased stretch (gly residues) spans 351 to 386; the sequence is GGRGGSRGFGGRGGGRGGNRGFGGRGGARGGRGGFR. Arg353 is modified (omega-N-methylarginine). The RGG-box stretch occupies residues 353-384; that stretch reads RGGSRGFGGRGGGRGGNRGFGGRGGARGGRGG. Arg357, Arg362, and Arg366 each carry asymmetric dimethylarginine; by HMT1; alternate. 3 positions are modified to omega-N-methylarginine; by HMT1; alternate: Arg357, Arg362, and Arg366. The tract at residues 366 to 384 is RNA-binding RGG-box; the sequence is RGGNRGFGGRGGARGGRGG. Arg370 is subject to Omega-N-methylarginine. Arg375, Arg379, and Arg382 each carry asymmetric dimethylarginine; by HMT1; alternate. Omega-N-methylarginine; by HMT1; alternate occurs at positions 375, 379, and 382. Arg386 bears the Omega-N-methylarginine mark.

This sequence belongs to the RRM GAR family. In terms of processing, methylated by HMT1, forming asymmetric dimethylarginines (DMA) within a domain referred to as an RGG box, made up of repeated Gly-Gly dipeptides interspersed with Arg and aromatic residues. Post-translationally, pyrophosphorylated by 5-diphosphoinositol pentakisphosphate (5-IP7). Serine pyrophosphorylation is achieved by Mg(2+)-dependent, but enzyme independent transfer of a beta-phosphate from a inositol pyrophosphate to a pre-phosphorylated serine residue.

Its subcellular location is the nucleus. The protein localises to the nucleolus. Involved in pre-rRNA processing. Specifically binds nuclear localization sequences. Candidate for a receptor at the nucleus that may be involved in both RNA and protein transport. Binds telomeric sequences of the type (TG[1-3])n in vitro. The polypeptide is Nuclear localization sequence-binding protein (Saccharomyces cerevisiae (strain ATCC 204508 / S288c) (Baker's yeast)).